The following is a 344-amino-acid chain: NADH-quinone oxidoreductase subunit H 2 (344 aa).

A run of 8 helical transmembrane segments spans residues 13-33 (LPIL…VAWL), 82-102 (ILFL…WAVI), 116-136 (ALLY…LAGW), 161-181 (MGFA…GEIV), 188-208 (FWHW…ISGV), 240-260 (LFFL…ALMF), 280-300 (VPGI…YLWF), and 319-339 (VFIP…VAQL).

This sequence belongs to the complex I subunit 1 family. As to quaternary structure, NDH-1 is composed of 14 different subunits. Subunits NuoA, H, J, K, L, M, N constitute the membrane sector of the complex.

It localises to the cell inner membrane. It carries out the reaction a quinone + NADH + 5 H(+)(in) = a quinol + NAD(+) + 4 H(+)(out). Its function is as follows. NDH-1 shuttles electrons from NADH, via FMN and iron-sulfur (Fe-S) centers, to quinones in the respiratory chain. The immediate electron acceptor for the enzyme in this species is believed to be ubiquinone. Couples the redox reaction to proton translocation (for every two electrons transferred, four hydrogen ions are translocated across the cytoplasmic membrane), and thus conserves the redox energy in a proton gradient. This subunit may bind ubiquinone. The polypeptide is NADH-quinone oxidoreductase subunit H 2 (Nitrosococcus oceani (strain ATCC 19707 / BCRC 17464 / JCM 30415 / NCIMB 11848 / C-107)).